The primary structure comprises 302 residues: N-acetyl-D-glucosamine kinase (302 aa).

ATP contacts are provided by residues 4 to 11 and 133 to 140; these read GFDVGGTK and GFGGGLVF. The Zn(2+) site is built by His157, Cys177, Cys179, and Cys184.

Belongs to the ROK (NagC/XylR) family. NagK subfamily.

It catalyses the reaction N-acetyl-D-glucosamine + ATP = N-acetyl-D-glucosamine 6-phosphate + ADP + H(+). Its pathway is cell wall biogenesis; peptidoglycan recycling. Catalyzes the phosphorylation of N-acetyl-D-glucosamine (GlcNAc) derived from cell-wall degradation, yielding GlcNAc-6-P. This Aliivibrio salmonicida (strain LFI1238) (Vibrio salmonicida (strain LFI1238)) protein is N-acetyl-D-glucosamine kinase.